Reading from the N-terminus, the 337-residue chain is MAAPRDNVTLLFKLYCLAVMTLMAAVYTIALRYTRTSDKELYFSTTAVCITEVIKLLLSVGILAKETGSLGRFKASLRENVLGSPKELLKLSVPSLVYAVQNNMAFLALSNLDAAVYQVTYQLKIPCTALCTVLMLNRTLSKLQWVSVFMLCAGVTLVQWKPAQATKVVVEQNPLLGFGAIAIAVLCSGFAGVYFEKVLKSSDTSLWVRNIQMYLSGIIVTLAGVYLSDGAEIKEKGFFYGYTYYVWFVIFLASVGGLYTSVVVKYTDNIMKGFSAAAAIVLSTIASVMLFGLQITLTFALGTLLVCVSIYLYGLPRQDTTSIQQGETASKERVIGV.

Over 1–9 (MAAPRDNVT) the chain is Cytoplasmic. The helical transmembrane segment at 10–30 (LLFKLYCLAVMTLMAAVYTIA) threads the bilayer. The Lumenal segment spans residues 31 to 45 (LRYTRTSDKELYFST). A helical membrane pass occupies residues 46 to 64 (TAVCITEVIKLLLSVGILA). A CMP-N-acetyl-beta-neuraminate-binding site is contributed by Lys-55. Topologically, residues 65–87 (KETGSLGRFKASLRENVLGSPKE) are cytoplasmic. Residues 88–108 (LLKLSVPSLVYAVQNNMAFLA) form a helical membrane-spanning segment. 101-102 (QN) provides a ligand contact to CMP-N-acetyl-beta-neuraminate. The Lumenal segment spans residues 109–114 (LSNLDA). Residues 115–135 (AVYQVTYQLKIPCTALCTVLM) form a helical membrane-spanning segment. Position 117–124 (117–124 (YQVTYQLK)) interacts with CMP-N-acetyl-beta-neuraminate. Topologically, residues 136–141 (LNRTLS) are cytoplasmic. The chain crosses the membrane as a helical span at residues 142-160 (KLQWVSVFMLCAGVTLVQW). Topologically, residues 161–175 (KPAQATKVVVEQNPL) are lumenal. A helical membrane pass occupies residues 176–196 (LGFGAIAIAVLCSGFAGVYFE). Residue Ser-188 participates in CMP-N-acetyl-beta-neuraminate binding. Residues 197–209 (KVLKSSDTSLWVR) lie on the Cytoplasmic side of the membrane. 210 to 214 (NIQMY) contacts CMP-N-acetyl-beta-neuraminate. A helical transmembrane segment spans residues 210–228 (NIQMYLSGIIVTLAGVYLS). Residues 229 to 243 (DGAEIKEKGFFYGYT) lie on the Lumenal side of the membrane. Residues 244-262 (YYVWFVIFLASVGGLYTSV) form a helical membrane-spanning segment. The Cytoplasmic segment spans residues 263-269 (VVKYTDN). A helical transmembrane segment spans residues 270–288 (IMKGFSAAAAIVLSTIASV). Residue Lys-272 coordinates CMP-N-acetyl-beta-neuraminate. At 289-296 (MLFGLQIT) the chain is on the lumenal side. Residues 297 to 315 (LTFALGTLLVCVSIYLYGL) form a helical membrane-spanning segment. Residues 316–337 (PRQDTTSIQQGETASKERVIGV) lie on the Cytoplasmic side of the membrane. The segment at 316–337 (PRQDTTSIQQGETASKERVIGV) is disordered.

This sequence belongs to the nucleotide-sugar transporter family. SLC35A subfamily. Monomer.

It localises to the golgi apparatus membrane. The protein localises to the golgi apparatus. The enzyme catalyses CMP-N-acetyl-beta-neuraminate(in) + CMP(out) = CMP-N-acetyl-beta-neuraminate(out) + CMP(in). It catalyses the reaction CMP-N-acetyl-beta-neuraminate(in) + AMP(out) = CMP-N-acetyl-beta-neuraminate(out) + AMP(in). The catalysed reaction is CDP-L-ribitol(in) + CDP(out) = CDP-L-ribitol(out) + CDP(in). It carries out the reaction UMP(out) + CMP-N-acetyl-beta-neuraminate(in) = UMP(in) + CMP-N-acetyl-beta-neuraminate(out). In terms of biological role, transports CMP-sialic acid from the cytosol into the Golgi apparatus, functioning as an antiporter that exchanges CMP-sialic acid for CMP. Binds both CMP-sialic acid and free CMP, but has higher affinity for free CMP. Also able to exchange CMP-sialic acid for AMP and UMP. Also mediates the transport of CDP-ribitol. The chain is CMP-sialic acid transporter from Homo sapiens (Human).